The primary structure comprises 28 residues: GLWSKIKDVAAAAGKAALGAVNEALGEQ.

Belongs to the frog skin active peptide (FSAP) family. Dermaseptin subfamily. In terms of tissue distribution, expressed by the skin glands.

The protein localises to the secreted. Its function is as follows. Possesses a potent antimicrobial activity against Gram-positive and Gram-negative bacteria. Probably acts by disturbing membrane functions with its amphipathic structure. This chain is Dermaseptin-H2, found in Pithecopus azureus (Orange-legged monkey tree frog).